The chain runs to 269 residues: UPF0524 protein C3orf70 homolog A (269 aa).

Disordered stretches follow at residues valine 139–isoleucine 203 and aspartate 215–cysteine 249. Positions arginine 141 to threonine 150 are enriched in pro residues. Residues histidine 151 to arginine 164 are compositionally biased toward low complexity. A compositionally biased stretch (basic and acidic residues) spans glutamine 179–histidine 191. Residues aspartate 215–serine 233 show a composition bias toward acidic residues.

This sequence belongs to the UPF0524 family.

Plays a role in neuronal and neurobehavioral development. Required for normal expression of neuronal markers elavl3 and eno2 and neurobehaviors related to circadian rhythm and changes in light-dark conditions. In Danio rerio (Zebrafish), this protein is UPF0524 protein C3orf70 homolog A.